A 315-amino-acid polypeptide reads, in one-letter code: O-antigen chain rhamnosyltransferase WbaN (315 aa).

This sequence belongs to the glycosyltransferase 2 family.

It catalyses the reaction alpha-D-galactosyl-di-trans,octa-cis-undecaprenyl diphosphate + dTDP-beta-L-rhamnose = alpha-L-rhamnosyl-(1-&gt;3)-alpha-D-galactosyl-1-diphospho-di-trans,octa-cis-undecaprenol + dTDP + H(+). It functions in the pathway bacterial outer membrane biogenesis; LPS O-antigen biosynthesis. Its function is as follows. Rhamnosyltransferase involved in the biosynthesis of the repeat unit of the lipopolysaccharide (LPS) O-antigen region. Catalyzes the addition of a rhamnose to the galactosyl-undecaprenyl diphosphate intermediate. The chain is O-antigen chain rhamnosyltransferase WbaN from Salmonella anatum.